The chain runs to 479 residues: Protein phosphatase 1B (479 aa).

Over residues 1–14 (MGAFLDKPKTEKHN) the composition is skewed to basic and acidic residues. Residues 1-20 (MGAFLDKPKTEKHNAHGAGN) form a disordered region. Glycine 2 carries the N-myristoyl glycine lipid modification. Residue lysine 12 forms a Glycyl lysine isopeptide (Lys-Gly) (interchain with G-Cter in ISG15) linkage. The 273-residue stretch at 23-295 (RYGLSSMQGW…DNMSIVLVCF (273 aa)) folds into the PPM-type phosphatase domain. Aspartate 60 and glycine 61 together coordinate Mn(2+). A Glycyl lysine isopeptide (Lys-Gly) (interchain with G-Cter in ISG15) cross-link involves residue lysine 142. Mn(2+) contacts are provided by aspartate 243 and aspartate 286. Phosphoserine is present on serine 386. The interval 423-479 (VEGEESPAEPAATATSSNSDAGNPVTMQESHTESESGLAELDSSNEDAGTKMSGEKI) is disordered. Positions 430 to 439 (AEPAATATSS) are enriched in low complexity. The span at 440-451 (NSDAGNPVTMQE) shows a compositional bias: polar residues.

It belongs to the PP2C family. As to quaternary structure, monomer. Interacts with PAK6. Interacts with the phosphorylated form of IKBKB/IKKB. It depends on Mg(2+) as a cofactor. Mn(2+) serves as cofactor. Isgylation negatively regulates its activity. In terms of processing, N-myristoylation is essential for the recognition of its substrates for dephosphorylation. In terms of tissue distribution, highly expressed in heart and skeletal muscle.

It is found in the cytoplasm. Its subcellular location is the cytosol. The protein localises to the membrane. The catalysed reaction is O-phospho-L-seryl-[protein] + H2O = L-seryl-[protein] + phosphate. It carries out the reaction O-phospho-L-threonyl-[protein] + H2O = L-threonyl-[protein] + phosphate. Functionally, enzyme with a broad specificity. Dephosphorylates CDK2 and CDK6 in vitro. Dephosphorylates PRKAA1 and PRKAA2. Inhibits TBK1-mediated antiviral signaling by dephosphorylating it at 'Ser-172'. Plays an important role in the termination of TNF-alpha-mediated NF-kappa-B activation through dephosphorylating and inactivating IKBKB/IKKB. This chain is Protein phosphatase 1B (PPM1B), found in Homo sapiens (Human).